A 33-amino-acid chain; its full sequence is Photosystem II reaction center protein Psb30 (33 aa).

The helical transmembrane segment at 5-25 (VIAQLIALALIVGSGPLVIAL) threads the bilayer.

It belongs to the Psb30/Ycf12 family. As to quaternary structure, PSII is composed of 1 copy each of membrane proteins PsbA, PsbB, PsbC, PsbD, PsbE, PsbF, PsbH, PsbI, PsbJ, PsbK, PsbL, PsbM, PsbT, PsbX, PsbY, PsbZ, Psb30/Ycf12, peripheral proteins of the oxygen-evolving complex and a large number of cofactors. It forms dimeric complexes.

The protein resides in the plastid. It localises to the chloroplast thylakoid membrane. Its function is as follows. A core subunit of photosystem II (PSII), probably helps stabilize the reaction center. This chain is Photosystem II reaction center protein Psb30, found in Physcomitrium patens (Spreading-leaved earth moss).